We begin with the raw amino-acid sequence, 24 residues long: Humanin-like 13 (24 aa).

This sequence belongs to the humanin family.

It is found in the secreted. It localises to the cytoplasm. Plays a role as a neuroprotective and antiapoptotic factor. The polypeptide is Humanin-like 13 (Homo sapiens (Human)).